The primary structure comprises 309 residues: MGVAAAAGRLLAAVDWEREAYPAYRDFFALPLFAVFFLVVRYLLDCFVFEWIGRKLIFGKEKVDYEKEETRKKIRKFKESAWKCVYFLSGEILSLSVTYNEPWFTNTKYFWVGPGDQVWPDQKIKWKLKAVYMYAAGFYTYSIFALMFWETRRSDFGVSMSHHVATVALIVLSYVFRFARVGSVVLAIHDASDVFLEVGKMAKYSHCDLLANVAFLLFVVSWVLLRLTYFPFWILRSTSYEVLLTLDKKKHNFDGPIYYYVFNSLLFSLLVLHIYWWVLIYRMLVRQIKTRNVGDDVRSDSEGEDEHED.

A run of 6 helical transmembrane segments spans residues 27 to 47, 84 to 104, 130 to 150, 156 to 176, 215 to 235, and 260 to 280; these read FFAL…LDCF, CVYF…EPWF, AVYM…MFWE, FGVS…SYVF, FLLF…FWIL, and YVFN…WVLI. The TLC domain maps to 75 to 289; that stretch reads RKFKESAWKC…IYRMLVRQIK (215 aa).

The protein localises to the endoplasmic reticulum membrane. Functionally, mediates resistance to sphinganine-analog mycotoxins (SAMs) by restoring the sphingolipid biosynthesis. Could salvage the transport of GPI-anchored proteins from the endoplasmic reticulum to the Golgi apparatus in ceramides-depleted cells after SAM exposure. This is ASC1-like protein 1 from Oryza sativa subsp. japonica (Rice).